The following is a 299-amino-acid chain: Protein-methionine-sulfoxide reductase catalytic subunit MsrP (299 aa).

Residues 1-44 constitute a signal peptide (tat-type signal); the sequence is MAHRWINDLTPADITPRGAWMNRRQVMAGMAGAGLAAFAGSAQA. Residues N59, 62-63, C117, T152, N200, R205, and 216-218 each bind Mo-molybdopterin; these read YE and SIK.

It belongs to the MsrP family. Heterodimer of a catalytic subunit (MsrP) and a heme-binding subunit (MsrQ). Requires Mo-molybdopterin as cofactor. Predicted to be exported by the Tat system. The position of the signal peptide cleavage has not been experimentally proven.

It localises to the periplasm. It catalyses the reaction L-methionyl-[protein] + a quinone + H2O = L-methionyl-(S)-S-oxide-[protein] + a quinol. The enzyme catalyses L-methionyl-[protein] + a quinone + H2O = L-methionyl-(R)-S-oxide-[protein] + a quinol. Its function is as follows. Part of the MsrPQ system that repairs oxidized periplasmic proteins containing methionine sulfoxide residues (Met-O), using respiratory chain electrons. Thus protects these proteins from oxidative-stress damage caused by reactive species of oxygen and chlorine generated by the host defense mechanisms. MsrPQ is essential for the maintenance of envelope integrity under bleach stress, rescuing a wide series of structurally unrelated periplasmic proteins from methionine oxidation. The catalytic subunit MsrP is non-stereospecific, being able to reduce both (R-) and (S-) diastereoisomers of methionine sulfoxide. The protein is Protein-methionine-sulfoxide reductase catalytic subunit MsrP of Ruegeria pomeroyi (strain ATCC 700808 / DSM 15171 / DSS-3) (Silicibacter pomeroyi).